The following is a 258-amino-acid chain: Ubiquinone/menaquinone biosynthesis C-methyltransferase UbiE (258 aa).

S-adenosyl-L-methionine contacts are provided by residues threonine 81, aspartate 102, and 130-131 (NA).

This sequence belongs to the class I-like SAM-binding methyltransferase superfamily. MenG/UbiE family.

It catalyses the reaction a 2-demethylmenaquinol + S-adenosyl-L-methionine = a menaquinol + S-adenosyl-L-homocysteine + H(+). It carries out the reaction a 2-methoxy-6-(all-trans-polyprenyl)benzene-1,4-diol + S-adenosyl-L-methionine = a 5-methoxy-2-methyl-3-(all-trans-polyprenyl)benzene-1,4-diol + S-adenosyl-L-homocysteine + H(+). It functions in the pathway quinol/quinone metabolism; menaquinone biosynthesis; menaquinol from 1,4-dihydroxy-2-naphthoate: step 2/2. Its pathway is cofactor biosynthesis; ubiquinone biosynthesis. Functionally, methyltransferase required for the conversion of demethylmenaquinol (DMKH2) to menaquinol (MKH2) and the conversion of 2-polyprenyl-6-methoxy-1,4-benzoquinol (DDMQH2) to 2-polyprenyl-3-methyl-6-methoxy-1,4-benzoquinol (DMQH2). This is Ubiquinone/menaquinone biosynthesis C-methyltransferase UbiE from Allorhizobium ampelinum (strain ATCC BAA-846 / DSM 112012 / S4) (Agrobacterium vitis (strain S4)).